Consider the following 157-residue polypeptide: Ribosome maturation factor RimP (157 aa).

Belongs to the RimP family.

Its subcellular location is the cytoplasm. In terms of biological role, required for maturation of 30S ribosomal subunits. This chain is Ribosome maturation factor RimP, found in Geobacillus kaustophilus (strain HTA426).